We begin with the raw amino-acid sequence, 521 residues long: Phosphoenolpyruvate carboxykinase (ATP) (521 aa).

Substrate is bound by residues arginine 52, tyrosine 186, and lysine 192. ATP contacts are provided by residues lysine 192, histidine 211, and 227 to 235 (GLSGTGKTT). Residues lysine 192 and histidine 211 each contribute to the Mn(2+) site. Aspartate 248 lines the Mn(2+) pocket. Residues glutamate 276, arginine 313, 432 to 433 (RI), and threonine 438 each bind ATP. Substrate is bound at residue arginine 313.

The protein belongs to the phosphoenolpyruvate carboxykinase (ATP) family. Requires Mn(2+) as cofactor.

It is found in the cytoplasm. It carries out the reaction oxaloacetate + ATP = phosphoenolpyruvate + ADP + CO2. The protein operates within carbohydrate biosynthesis; gluconeogenesis. Involved in the gluconeogenesis. Catalyzes the conversion of oxaloacetate (OAA) to phosphoenolpyruvate (PEP) through direct phosphoryl transfer between the nucleoside triphosphate and OAA. This Caldanaerobacter subterraneus subsp. tengcongensis (strain DSM 15242 / JCM 11007 / NBRC 100824 / MB4) (Thermoanaerobacter tengcongensis) protein is Phosphoenolpyruvate carboxykinase (ATP).